The sequence spans 635 residues: Threonine--tRNA ligase (635 aa).

A TGS domain is found at 1–61; the sequence is MVSIRLPDGS…DRDASLAIVT (61 aa). The catalytic stretch occupies residues 242-533; the sequence is DHRKLGKQLD…LIEHHAGAMP (292 aa). The Zn(2+) site is built by Cys-333, His-384, and His-510.

Belongs to the class-II aminoacyl-tRNA synthetase family. In terms of assembly, homodimer. Zn(2+) is required as a cofactor.

It is found in the cytoplasm. The catalysed reaction is tRNA(Thr) + L-threonine + ATP = L-threonyl-tRNA(Thr) + AMP + diphosphate + H(+). Functionally, catalyzes the attachment of threonine to tRNA(Thr) in a two-step reaction: L-threonine is first activated by ATP to form Thr-AMP and then transferred to the acceptor end of tRNA(Thr). Also edits incorrectly charged L-seryl-tRNA(Thr). In Burkholderia lata (strain ATCC 17760 / DSM 23089 / LMG 22485 / NCIMB 9086 / R18194 / 383), this protein is Threonine--tRNA ligase.